A 142-amino-acid chain; its full sequence is Large-conductance mechanosensitive channel (142 aa).

2 helical membrane-spanning segments follow: residues 14 to 34 and 86 to 106; these read VVDLAVAVIIGAAFGKIVSSL and FGQFITVAVNFLLIAFVVFLV.

This sequence belongs to the MscL family. In terms of assembly, homopentamer.

It localises to the cell inner membrane. In terms of biological role, channel that opens in response to stretch forces in the membrane lipid bilayer. May participate in the regulation of osmotic pressure changes within the cell. This is Large-conductance mechanosensitive channel from Rhizorhabdus wittichii (strain DSM 6014 / CCUG 31198 / JCM 15750 / NBRC 105917 / EY 4224 / RW1) (Sphingomonas wittichii).